We begin with the raw amino-acid sequence, 549 residues long: Chaperonin GroEL (549 aa).

Residues 30-33 (TLGP), Lys51, 87-91 (DGTTT), Gly415, and Asp495 contribute to the ATP site.

It belongs to the chaperonin (HSP60) family. Forms a cylinder of 14 subunits composed of two heptameric rings stacked back-to-back. Interacts with the co-chaperonin GroES.

The protein localises to the cytoplasm. It catalyses the reaction ATP + H2O + a folded polypeptide = ADP + phosphate + an unfolded polypeptide.. In terms of biological role, together with its co-chaperonin GroES, plays an essential role in assisting protein folding. The GroEL-GroES system forms a nano-cage that allows encapsulation of the non-native substrate proteins and provides a physical environment optimized to promote and accelerate protein folding. This chain is Chaperonin GroEL, found in Colwellia maris.